A 415-amino-acid chain; its full sequence is DNA double-strand break repair protein Mre11 (415 aa).

Mn(2+)-binding residues include Asp10, His12, Asp51, and Asn86. The active-site Proton donor is the His87. The Mn(2+) site is built by His174, His208, and His210.

It belongs to the MRE11/RAD32 family. Homodimer. Forms a heterotetramer composed of two Mre11 subunits and two Rad50 subunits. Requires Mn(2+) as cofactor.

Nuclease activity is regulated by Rad50. Functionally, part of the Rad50/Mre11 complex, which is involved in the early steps of DNA double-strand break (DSB) repair. The complex may facilitate opening of the processed DNA ends to aid in the recruitment of HerA and NurA. Mre11 binds to DSB ends and has both double-stranded 3'-5' exonuclease activity and single-stranded endonuclease activity. This is DNA double-strand break repair protein Mre11 from Pyrococcus abyssi (strain GE5 / Orsay).